The sequence spans 407 residues: 8-amino-7-oxononanoate synthase (407 aa).

Arg24 provides a ligand contact to substrate. Pyridoxal 5'-phosphate is bound at residue 111 to 112 (GF). His137 contacts substrate. Residues Ser183, His211, and Thr239 each coordinate pyridoxal 5'-phosphate. Lys242 is subject to N6-(pyridoxal phosphate)lysine. Position 356 (Thr356) interacts with substrate.

It belongs to the class-II pyridoxal-phosphate-dependent aminotransferase family. BioF subfamily. In terms of assembly, homodimer. Pyridoxal 5'-phosphate serves as cofactor.

It carries out the reaction 6-carboxyhexanoyl-[ACP] + L-alanine + H(+) = (8S)-8-amino-7-oxononanoate + holo-[ACP] + CO2. It participates in cofactor biosynthesis; biotin biosynthesis. In terms of biological role, catalyzes the decarboxylative condensation of pimeloyl-[acyl-carrier protein] and L-alanine to produce 8-amino-7-oxononanoate (AON), [acyl-carrier protein], and carbon dioxide. This Stenotrophomonas maltophilia (strain R551-3) protein is 8-amino-7-oxononanoate synthase.